Reading from the N-terminus, the 2294-residue chain is Reducing polyketide synthase BOA9 (2294 aa).

In terms of domain architecture, Ketosynthase family 3 (KS3) spans 4 to 409 (PEPVAIIGMG…GANATAIVEA (406 aa)). The interval 537–853 (IFTGQGAQNA…DYAATLVRGQ (317 aa)) is malonyl-CoA:ACP transacylase (MAT) domain. The active-site For malonyltransferase activity is Ser-630. An N-terminal hotdog fold region spans residues 930–1067 (HDLLGAILPG…GTVTKKKAVT (138 aa)). Positions 930–1104 (HDLLGAILPG…LNYGPAFNGL (175 aa)) are dehydratase (DH) domain. Residues 930–1236 (HDLLGAILPG…CTQYSEALDD (307 aa)) enclose the PKS/mFAS DH domain. His-962 functions as the Proton acceptor; for dehydratase activity in the catalytic mechanism. The tract at residues 1078 to 1236 (QEPKAARTWY…CTQYSEALDD (159 aa)) is C-terminal hotdog fold. Asp-1142 acts as the Proton donor; for dehydratase activity in catalysis. An enoyl reductase (ER) domain region spans residues 1618–1908 (GIFDTIHFKD…KNSRIGRVVV (291 aa)). Positions 1934–2107 (VHTYLLGVLE…LPATTISLTV (174 aa)) are ketoreductase (KR) domain. In terms of domain architecture, Carrier spans 2214–2292 (LLLPDILEMI…SLAKKIYDIR (79 aa)). Position 2251 is an O-(pantetheine 4'-phosphoryl)serine (Ser-2251).

Its pathway is polyketide biosynthesis. Its function is as follows. Reducing polyketide synthase; part of the gene cluster B that mediates the biosynthesis of botcinic acid and its botcinin derivatives, acetate-derived polyketides that contribute to virulence when combined with the sesquiterpene botrydial. Botcinic acid and its derivatives have been shown to induce chlorosis and necrosis during host plant infection, but also have antifungal activities. Two polyketide synthases, BOA6 and BOA9, are involved in the biosynthesis of botcinins. BOA6 mediates the formation of the per-methylated tetraketide core by condensation of four units of malonyl-CoA with one unit of acetyl-CoA, which would be methylated in activated methylene groups to yield a bicyclic acid intermediate that could then either be converted to botrylactone derivatives or lose the starter acetate unit through a retro-Claisen type C-C bond cleavage to yield botcinin derivatives. The second polyketide synthase, BOA9, is probably required for the biosynthesis of the tetraketide side chain of botcinins. The methyltransferase (MT) domain within BOA6 is probably responsible for the incorporation of four methyl groups. The trans-enoyl reductase BOA5 might take over the enoyl reductase function of BOA6 that misses an ER domain. The monooxygenases BOA2, BOA3 and BOA4 might be involved in further hydroxylations at C4, C5 and C8, whereas BOA7, close to BOA9, could potentially be involved in the hydroxylation at C4 in the side chain of botcinins. This is Reducing polyketide synthase BOA9 from Botryotinia fuckeliana (strain B05.10) (Noble rot fungus).